Consider the following 336-residue polypeptide: Galectin-12 (336 aa).

2 consecutive Galectin domains span residues 49-183 (YVTT…VGFL) and 212-336 (CSHA…CVHS).

In terms of tissue distribution, not widely expressed. Predominantly expressed in adipose tissue.

The protein resides in the nucleus. Functionally, binds lactose. May participate in the apoptosis of adipocytes. This Homo sapiens (Human) protein is Galectin-12 (LGALS12).